The following is a 445-amino-acid chain: 3-phosphoshikimate 1-carboxyvinyltransferase (445 aa).

The 3-phosphoshikimate site is built by K21, S22, and R26. K21 contributes to the phosphoenolpyruvate binding site. Residues G92 and R120 each contribute to the phosphoenolpyruvate site. Residues S165, Q166, D307, and K334 each coordinate 3-phosphoshikimate. Residue Q166 coordinates phosphoenolpyruvate. The active-site Proton acceptor is the D307. Positions 338, 379, and 405 each coordinate phosphoenolpyruvate.

The protein belongs to the EPSP synthase family. Monomer.

The protein resides in the cytoplasm. It carries out the reaction 3-phosphoshikimate + phosphoenolpyruvate = 5-O-(1-carboxyvinyl)-3-phosphoshikimate + phosphate. Its pathway is metabolic intermediate biosynthesis; chorismate biosynthesis; chorismate from D-erythrose 4-phosphate and phosphoenolpyruvate: step 6/7. Its function is as follows. Catalyzes the transfer of the enolpyruvyl moiety of phosphoenolpyruvate (PEP) to the 5-hydroxyl of shikimate-3-phosphate (S3P) to produce enolpyruvyl shikimate-3-phosphate and inorganic phosphate. The chain is 3-phosphoshikimate 1-carboxyvinyltransferase from Chlamydia pneumoniae (Chlamydophila pneumoniae).